Here is a 312-residue protein sequence, read N- to C-terminus: Aspartate carbamoyltransferase catalytic subunit (312 aa).

The carbamoyl phosphate site is built by Arg62 and Thr63. Lys90 contributes to the L-aspartate binding site. Carbamoyl phosphate is bound by residues Arg112, His140, and Gln143. L-aspartate-binding residues include Arg173 and Arg228. Carbamoyl phosphate is bound by residues Gly269 and Pro270.

The protein belongs to the aspartate/ornithine carbamoyltransferase superfamily. ATCase family. Heterododecamer (2C3:3R2) of six catalytic PyrB chains organized as two trimers (C3), and six regulatory PyrI chains organized as three dimers (R2).

It catalyses the reaction carbamoyl phosphate + L-aspartate = N-carbamoyl-L-aspartate + phosphate + H(+). It participates in pyrimidine metabolism; UMP biosynthesis via de novo pathway; (S)-dihydroorotate from bicarbonate: step 2/3. Its function is as follows. Catalyzes the condensation of carbamoyl phosphate and aspartate to form carbamoyl aspartate and inorganic phosphate, the committed step in the de novo pyrimidine nucleotide biosynthesis pathway. This is Aspartate carbamoyltransferase catalytic subunit from Deinococcus geothermalis (strain DSM 11300 / CIP 105573 / AG-3a).